The chain runs to 660 residues: Kinesin-like protein KIF2A (660 aa).

Residues 1–140 (MVTSLNEDNE…QQELREKRAQ (140 aa)) form a disordered region. The segment at 1-171 (MVTSLNEDNE…LDYRPLTTAD (171 aa)) is globular. Phosphoserine is present on Ser-48. Phosphothreonine is present on residues Thr-51 and Thr-70. At Ser-73 the chain carries Phosphoserine. The residue at position 75 (Lys-75) is an N6-acetyllysine. The span at 96 to 106 (LPEQSSSAQQN) shows a compositional bias: polar residues. Residues 113-140 (CVKEVEKLQEKREKRRLQQQELREKRAQ) show a composition bias toward basic and acidic residues. The Kinesin motor domain occupies 177 to 507 (RICVCVRKRP…LRYANRVKEL (331 aa)). 267–274 (GQTGSGKT) lines the ATP pocket. A coiled-coil region spans residues 614-653 (ATQLEAILEQKIDILTELRDKVKSFRAALQEEEQASKQIN).

This sequence belongs to the TRAFAC class myosin-kinesin ATPase superfamily. Kinesin family. MCAK/KIF2 subfamily. As to quaternary structure, interacts with AURKA and PLK1. Interacts with PSRC1. Interacts with MCRS1; the interaction enhances recruitment of KIF2A to the minus ends of spindle microtubules which promotes chromosome alignment.

It localises to the cytoplasm. Its subcellular location is the cytoskeleton. It is found in the microtubule organizing center. The protein resides in the centrosome. The protein localises to the spindle pole. It localises to the spindle. Functionally, plus end-directed microtubule-dependent motor required for normal brain development. May regulate microtubule dynamics during axonal growth. Required for normal progression through mitosis. Required for normal congress of chromosomes at the metaphase plate. Required for normal spindle dynamics during mitosis. Promotes spindle turnover. Implicated in formation of bipolar mitotic spindles. Has microtubule depolymerization activity. The chain is Kinesin-like protein KIF2A (KIF2A) from Bos taurus (Bovine).